Here is a 506-residue protein sequence, read N- to C-terminus: GMP synthase [glutamine-hydrolyzing] (506 aa).

One can recognise a Glutamine amidotransferase type-1 domain in the interval 3–188 (GFVILDFGSQ…AQGMCKAPAD (186 aa)). The active-site Nucleophile is the Cys80. Catalysis depends on residues His162 and Glu164. The GMPS ATP-PPase domain occupies 189–381 (WDAPHIKDIL…LGLPKEMLWR (193 aa)). 217 to 223 (SGGVDST) contributes to the ATP binding site.

In terms of assembly, homodimer.

It catalyses the reaction XMP + L-glutamine + ATP + H2O = GMP + L-glutamate + AMP + diphosphate + 2 H(+). Its pathway is purine metabolism; GMP biosynthesis; GMP from XMP (L-Gln route): step 1/1. In terms of biological role, catalyzes the synthesis of GMP from XMP. The chain is GMP synthase [glutamine-hydrolyzing] from Bdellovibrio bacteriovorus (strain ATCC 15356 / DSM 50701 / NCIMB 9529 / HD100).